Reading from the N-terminus, the 481-residue chain is Aspartyl/glutamyl-tRNA(Asn/Gln) amidotransferase subunit B (481 aa).

This sequence belongs to the GatB/GatE family. GatB subfamily. In terms of assembly, heterotrimer of A, B and C subunits.

It carries out the reaction L-glutamyl-tRNA(Gln) + L-glutamine + ATP + H2O = L-glutaminyl-tRNA(Gln) + L-glutamate + ADP + phosphate + H(+). The catalysed reaction is L-aspartyl-tRNA(Asn) + L-glutamine + ATP + H2O = L-asparaginyl-tRNA(Asn) + L-glutamate + ADP + phosphate + 2 H(+). Allows the formation of correctly charged Asn-tRNA(Asn) or Gln-tRNA(Gln) through the transamidation of misacylated Asp-tRNA(Asn) or Glu-tRNA(Gln) in organisms which lack either or both of asparaginyl-tRNA or glutaminyl-tRNA synthetases. The reaction takes place in the presence of glutamine and ATP through an activated phospho-Asp-tRNA(Asn) or phospho-Glu-tRNA(Gln). The chain is Aspartyl/glutamyl-tRNA(Asn/Gln) amidotransferase subunit B from Fusobacterium nucleatum subsp. nucleatum (strain ATCC 25586 / DSM 15643 / BCRC 10681 / CIP 101130 / JCM 8532 / KCTC 2640 / LMG 13131 / VPI 4355).